The following is a 360-amino-acid chain: Peptide chain release factor 1 (360 aa).

Glutamine 235 bears the N5-methylglutamine mark.

This sequence belongs to the prokaryotic/mitochondrial release factor family. Post-translationally, methylated by PrmC. Methylation increases the termination efficiency of RF1.

Its subcellular location is the cytoplasm. Functionally, peptide chain release factor 1 directs the termination of translation in response to the peptide chain termination codons UAG and UAA. This is Peptide chain release factor 1 from Burkholderia ambifaria (strain MC40-6).